The sequence spans 456 residues: Exodeoxyribonuclease 7 large subunit (456 aa).

It belongs to the XseA family. As to quaternary structure, heterooligomer composed of large and small subunits.

It localises to the cytoplasm. It carries out the reaction Exonucleolytic cleavage in either 5'- to 3'- or 3'- to 5'-direction to yield nucleoside 5'-phosphates.. In terms of biological role, bidirectionally degrades single-stranded DNA into large acid-insoluble oligonucleotides, which are then degraded further into small acid-soluble oligonucleotides. The polypeptide is Exodeoxyribonuclease 7 large subunit (Lactobacillus gasseri (strain ATCC 33323 / DSM 20243 / BCRC 14619 / CIP 102991 / JCM 1131 / KCTC 3163 / NCIMB 11718 / NCTC 13722 / AM63)).